Consider the following 660-residue polypeptide: MSKIIELPEILANQIAAGEVIERPASVVKELVENAIDANSRQITIEIEESGLKSIKITDNGEGMSEENLPLSILRHATSKIKNQSDLFRIRTLGFRGEALPSIASISELRIETSTADSPYGSLLVAKGGQIERQEVISTPVGTKITVENLFYNTPARLKYMKSLQSELAHIVDVVNRLSLGHPEVSFTLICDGREMTKTSGTGDLKQAIAGIYGLNTAKKMIEISNADLDFEVSGYVSLPELTRANRNYITILINGRYIKNFLLNRAILDGYGSKLMVGRFPIVVIDIQIDPYLADVNVHPTKQEVRISKEKELMALISTAIAESLKSQDLIPDALENLAKSTVRSSTKYEQTKLPLQSSKLYFDPQKNDFYIKEPQKTTELTVSEESPNFTLYTNIDNTVKEDRNLDQTSASASVKHASRSQDENQLSEHPNLDFTNKQKMEQLISKLENEKTSTFPELDFFGQMHGTYLFAQGKDGLFIIDQHAAQERVKYEYYRDKIGKVDTSLQQLLVPYLFEFSGADFIQLQEKMSFLNEVGIFLEPYGMNTFILREHPIWMKESEIESGVYEMCDMLLLTNQVSIKTYRAELAIMMSCKRSIKANHALDDYSARHLLEQLSQCQNPYNCPHGRPVLVHFTKADMEKMFRRIQENHTSLRDLGKY.

A disordered region spans residues 408-436; that stretch reads DQTSASASVKHASRSQDENQLSEHPNLDF. The segment covering 425 to 436 has biased composition (polar residues); it reads ENQLSEHPNLDF.

Belongs to the DNA mismatch repair MutL/HexB family.

Functionally, this protein is involved in the repair of mismatches in DNA. It is required for dam-dependent methyl-directed DNA mismatch repair. May act as a 'molecular matchmaker', a protein that promotes the formation of a stable complex between two or more DNA-binding proteins in an ATP-dependent manner without itself being part of a final effector complex. The protein is DNA mismatch repair protein MutL of Streptococcus uberis (strain ATCC BAA-854 / 0140J).